The sequence spans 366 residues: MQRYIQRLEEGHDLSPEEAEDAVGKILSTAQDEEIGRFLLALRAKGEKPEEIAGFVRGMKKAGKTIRPKTSFRLVDTCGTGGDGLNTINISTAAAIVTAAAGVPVAKHGNRAATSMSGSSDVLDALGIKTDLEPEAVRQTIEEIGIGFMFAPVFHPAMKRVAGVRKKLGVRTVFNILGPLTNPAGTKGQVIGVFDKKLCEPIAYALAELGTEHALVVHGDGMDEITNTGETYVAELKDGKVSTYTLTPEALGMLRANPEDIKGGTPKENARDLLCIFKGQKGPKRDIVVMNAAAALYVGGIVGSIRQAIPIAEDAIDSGKVMVKFNQFKTFTSEFYRQKNKESLSGKSMSMRSRTSILSPASGERV.

5-phospho-alpha-D-ribose 1-diphosphate-binding positions include glycine 79, 82–83, threonine 87, 89–92, 107–115, and serine 119; these read GD, NIST, and KHGNRAATS. Anthranilate is bound at residue glycine 79. Serine 91 lines the Mg(2+) pocket. Asparagine 110 contributes to the anthranilate binding site. Arginine 165 contacts anthranilate. The Mg(2+) site is built by aspartate 223 and glutamate 224. Residues 342 to 366 are disordered; the sequence is ESLSGKSMSMRSRTSILSPASGERV. Residues 345–359 are compositionally biased toward polar residues; it reads SGKSMSMRSRTSILS.

The protein belongs to the anthranilate phosphoribosyltransferase family. Homodimer. It depends on Mg(2+) as a cofactor.

It catalyses the reaction N-(5-phospho-beta-D-ribosyl)anthranilate + diphosphate = 5-phospho-alpha-D-ribose 1-diphosphate + anthranilate. The protein operates within amino-acid biosynthesis; L-tryptophan biosynthesis; L-tryptophan from chorismate: step 2/5. In terms of biological role, catalyzes the transfer of the phosphoribosyl group of 5-phosphorylribose-1-pyrophosphate (PRPP) to anthranilate to yield N-(5'-phosphoribosyl)-anthranilate (PRA). This chain is Anthranilate phosphoribosyltransferase, found in Methanosarcina barkeri (strain Fusaro / DSM 804).